A 361-amino-acid polypeptide reads, in one-letter code: Transmembrane protein 116 (361 aa).

Helical transmembrane passes span 29–49 (WIQM…ILYA), 64–84 (FLLS…GLLF), 103–123 (TLYM…YTGL), 147–167 (LGPV…FVAG), 210–230 (CMAI…IFMG), 261–281 (MVLY…LATM), and 295–315 (VALY…NCLV).

It localises to the membrane. This Danio rerio (Zebrafish) protein is Transmembrane protein 116 (tmem116).